We begin with the raw amino-acid sequence, 394 residues long: Elongation factor Tu (394 aa).

Positions 10 to 204 (KPHVNVGTIG…HLDTYIPEPE (195 aa)) constitute a tr-type G domain. Residues 19–26 (GHVDHGKT) form a G1 region. 19-26 (GHVDHGKT) provides a ligand contact to GTP. T26 lines the Mg(2+) pocket. The tract at residues 60-64 (GITIN) is G2. The G3 stretch occupies residues 81–84 (DCPG). Residues 81–85 (DCPGH) and 136–139 (NKCD) each bind GTP. Residues 136-139 (NKCD) form a G4 region. The tract at residues 174–176 (SAL) is G5.

Belongs to the TRAFAC class translation factor GTPase superfamily. Classic translation factor GTPase family. EF-Tu/EF-1A subfamily. Monomer.

Its subcellular location is the cytoplasm. The enzyme catalyses GTP + H2O = GDP + phosphate + H(+). GTP hydrolase that promotes the GTP-dependent binding of aminoacyl-tRNA to the A-site of ribosomes during protein biosynthesis. This is Elongation factor Tu from Klebsiella pneumoniae subsp. pneumoniae (strain ATCC 700721 / MGH 78578).